The primary structure comprises 89 residues: Small ribosomal subunit protein uS15 (89 aa).

It belongs to the universal ribosomal protein uS15 family. As to quaternary structure, part of the 30S ribosomal subunit. Forms a bridge to the 50S subunit in the 70S ribosome, contacting the 23S rRNA.

Its function is as follows. One of the primary rRNA binding proteins, it binds directly to 16S rRNA where it helps nucleate assembly of the platform of the 30S subunit by binding and bridging several RNA helices of the 16S rRNA. In terms of biological role, forms an intersubunit bridge (bridge B4) with the 23S rRNA of the 50S subunit in the ribosome. The polypeptide is Small ribosomal subunit protein uS15 (Baumannia cicadellinicola subsp. Homalodisca coagulata).